Consider the following 81-residue polypeptide: Photosystem I iron-sulfur center (81 aa).

4Fe-4S ferredoxin-type domains are found at residues 2 to 31 (SHTVKIYDTCIGCTQCVRACPTDVLEMVPW) and 39 to 68 (VASSPRTEDCVGCKRCETACPTDFLSIRVY). The [4Fe-4S] cluster site is built by Cys-11, Cys-14, Cys-17, Cys-21, Cys-48, Cys-51, Cys-54, and Cys-58.

In terms of assembly, the cyanobacterial PSI reaction center is composed of one copy each of PsaA,B,C,D,E,F,I,J,K,L,M and X, and forms trimeric complexes. Requires [4Fe-4S] cluster as cofactor.

It is found in the cellular thylakoid membrane. The enzyme catalyses reduced [plastocyanin] + hnu + oxidized [2Fe-2S]-[ferredoxin] = oxidized [plastocyanin] + reduced [2Fe-2S]-[ferredoxin]. Apoprotein for the two 4Fe-4S centers FA and FB of photosystem I (PSI); essential for photochemical activity. FB is the terminal electron acceptor of PSI, donating electrons to ferredoxin. The C-terminus interacts with PsaA/B/D and helps assemble the protein into the PSI complex. Required for binding of PsaD and PsaE to PSI. PSI is a plastocyanin/cytochrome c6-ferredoxin oxidoreductase, converting photonic excitation into a charge separation, which transfers an electron from the donor P700 chlorophyll pair to the spectroscopically characterized acceptors A0, A1, FX, FA and FB in turn. The protein is Photosystem I iron-sulfur center of Trichormus variabilis (strain ATCC 29413 / PCC 7937) (Anabaena variabilis).